The chain runs to 1270 residues: MSSNTVNQRVNFASTKNPLEYPDFLEVQLKSFQDFLQLDTPPEKRKNEGLYKVFAENFPIADTRNNFVLEFLDYYIDPPRYTIDDCIERGLTYSVPLKAKLKLYCTDPDHEDFDTVIQDVFLGPIPYMTDKATFVINGAERVVVSQLHRSPGVFFGQSVHANGTKLYSARIIPFKGSWIEFATDINNVMYAYIDRKKKLPVTTLLRAIGFENDKDILEIFNLAEDVKVNKTNLKRVLGRKLAARVLKTWIEDFVDEDTGEVVSIERNEVIIDRETVLEEVHIDEILESGVQNILLHKDEPNQSDFSIIYNTLQKDPSNSEKEAVLYIYRQLRNADPADDASAREVINNLFFSEKRYDLGDVGRYRINKKLNLTTDMDVRVLTKEDIIEIIKYLIELINSKADVDDIDHLSNRRVRTVGEQLSNQFAVGLARMSRTIRERMNVRDNEVFTPIDLINAKTISSVINSFFGTNALSQFMDQTNPLAEITHKRRMSALGPGGLSRERAGFEVRDVHYTHYGRLCPIETPEGPNIGLISSLCVFAKINELGFIETPYRKVENGKVDLSDNGLVYLTAEEEEEKIIAQGNAPLNDDGTFVRNKVKSRQDADFPVVEPSEVDLMDVSPQQIASIAASLIPFLEHDDANRALMGSNMMRQAVPLLRSEAPIVGTGIERQLVRDSRTQITAEGDGVVDFVDATTIRILYDRTEDEEFVSFEPALKEYRIPKFRKTNQNMTIDLRPICDKGQRVKKGDILTEGYSTEKGELALGKNLLVAYMPWKGYNYEDAIVLNERVVREDLLTSVHVEEYSLEVRETKRGMEELTSDIPNVSEEATKDLDENGIVRIGARIEPGDIMIGKITPKGESDPSPEEKLLRAIFGDKAGDVKDASLKASPSLKGVVIDKKLFSRVIKNRSSKLADKALLPKIDDEFESKVADLKRILVKKLMTLTEGKVSQGVKDYLGAEVIAKGSKFSASDFDSLDFTSIQLSNWTSDDHTNGMVRDLVMNFIKKYKELDAELKRKKFAITIGDELPAGIIQMAKVYIAKKRKIGVGDKMAGRHGNKGIVSRVVRQEDMPFLADGTPVDIVLNPLGVPSRMNIGQIFEAVLGRAGKTLGVKFATPIFDGATMDDLDQWTDKAGLPRYCKTYLCDGGTGEQFDQAATVGVTYMLKLGHMVEDKMHARSIGPYSLITQQPLGGKAQFGGQRFGEMEVWALEGFGAAHILQEILTIKSDDVVGRSKAYEAIVKGEPMPQPGIPESLNVLLHELRGLGLSINLE.

Belongs to the RNA polymerase beta chain family. The RNAP catalytic core consists of 2 alpha, 1 beta, 1 beta' and 1 omega subunit. When a sigma factor is associated with the core the holoenzyme is formed, which can initiate transcription.

It carries out the reaction RNA(n) + a ribonucleoside 5'-triphosphate = RNA(n+1) + diphosphate. Functionally, DNA-dependent RNA polymerase catalyzes the transcription of DNA into RNA using the four ribonucleoside triphosphates as substrates. In Bacteroides thetaiotaomicron (strain ATCC 29148 / DSM 2079 / JCM 5827 / CCUG 10774 / NCTC 10582 / VPI-5482 / E50), this protein is DNA-directed RNA polymerase subunit beta.